Here is a 601-residue protein sequence, read N- to C-terminus: MAKNRNEIPEKLTWDLTTIYKTDKEWEAELTRIKSELSLVEETDPGHLLDSAESLLTITEKMLSISQQVEKLYVYASMKNDQDTREAKYQEYQSKATALYVKFGEVYAFYEPEFLKISKEVYNKWLGELQKLKNYDHMFERLFAKKAHILSQKEEKLLAAAGEIFESPSETFEIFDNADIKLPMVKNESDEMIQLTHGNYSSLMESKNRGVRKAAYKALYSNYEQYQHTYAKTLQTNVKVHNLNAQIRSYDSARQAALANNFVPEKVYDVLMEAIHQHLPLLHRYIELRKKILGITDLKMYGIYTPLSNLGYKFNYEDGVKKAEEVLAIFGKEYKGKVKAAFEQRWIDVEENIGKRSGAYSGGSYDTNAFMLLNWQETLDDLFTLVHETGHSMHSAFTRENQPYVYGNYPIFLAEIASTTNENILTETLLKESKDDKERFALLNHWLDSFRGTVFRQSQFAEFEQKIHEADAAGEVLTSEYLNSLYGEINEKYYNLAVKGNPEIQYEWARIPHFYYNFYVFQYATGFAAATFLAEKVVHGSTEDRQKYLEYLKAGSSAYPLEVIAKAGVDMESTDYLDAAFELFENRLSELEKLVEKGVHL.

Zn(2+) is bound at residue His-387. Glu-388 is an active-site residue. Zn(2+) is bound by residues His-391 and His-394.

The protein belongs to the peptidase M3B family. Requires Zn(2+) as cofactor.

Its function is as follows. Hydrolyzes peptides containing between 7 and 17 amino acids with a rather wide specificity. The protein is Oligoendopeptidase F, plasmid (pepF1) of Lactococcus lactis subsp. cremoris (Streptococcus cremoris).